The chain runs to 27 residues: Caerulein precursor fragment R8 (27 aa).

Expressed by the skin glands.

The protein resides in the secreted. Functionally, antimicrobial peptide. In Xenopus ruwenzoriensis (Uganda clawed frog), this protein is Caerulein precursor fragment R8.